A 313-amino-acid polypeptide reads, in one-letter code: MGLLIDGVWRDAWYDTKSSGGRFVRKESQYRGGLDAGFRGEPGRYHLYAGFACPWAHRVLIMRALKGLEEMISVSMVNAYMGENGWTFLPGDDVVPDSINGADYLYQVYTAADPTYTGRVTIPILWDKVEKRILNNESSEIIRILNSAFDDVGALPGDYYPAEFRPEIDRINARVYETLNNGVYRSGFATTQEAYEEAFYPLFDTLDWLEEHLTGREWLVGDRLTEADIRLFPTLVRFDAIYHGHFKCNLRRIADYPNLSRLVGKLASHERVAPTINLRHAKAHYYGSHPSVNPTGIVPVGPAQPLPGLTLQS.

Residue Cys53 is the Nucleophile of the active site. Glutathione contacts are provided by residues Trp86, Arg119–Ile122, and Glu137–Ser138. Positions Pro161–Tyr285 constitute a GST C-terminal domain. The active-site Proton donor/acceptor is Tyr184.

This sequence belongs to the GST superfamily. Xi-class GSH transferase family. As to quaternary structure, homodimer.

It carries out the reaction 2-(glutathione-S-yl)-hydroquinone + glutathione = hydroquinone + glutathione disulfide. In terms of biological role, catalyzes glutathione (GSH)-dependent reduction of glutathionyl-hydroquinones (GS-HQs) to the corresponding hydroquinones. Can act on halogenated substrates such as GS-2,6-dichloro-p-hydroquinone (GS-DiCH) and GS-trichloro-p-hydroquinone (GS-TriCH). Involved in the degradation of pentachlorophenol (PCP), a toxic pollutant. In Sphingobium chlorophenolicum, this protein is Glutathionyl-hydroquinone reductase PcpF.